The primary structure comprises 270 residues: Tryptophan synthase alpha chain (270 aa).

Active-site proton acceptor residues include E50 and D61.

The protein belongs to the TrpA family. As to quaternary structure, tetramer of two alpha and two beta chains.

The enzyme catalyses (1S,2R)-1-C-(indol-3-yl)glycerol 3-phosphate + L-serine = D-glyceraldehyde 3-phosphate + L-tryptophan + H2O. The protein operates within amino-acid biosynthesis; L-tryptophan biosynthesis; L-tryptophan from chorismate: step 5/5. Its function is as follows. The alpha subunit is responsible for the aldol cleavage of indoleglycerol phosphate to indole and glyceraldehyde 3-phosphate. This Chlorobium luteolum (strain DSM 273 / BCRC 81028 / 2530) (Pelodictyon luteolum) protein is Tryptophan synthase alpha chain.